The following is an 87-amino-acid chain: Exendin-4 (87 aa).

Residues 1 to 23 (MKIILWLCVFGLFLATLFPISWQ) form the signal peptide. The propeptide occupies 24 to 45 (MPVESGLSSEDSASSESFASKI). Ser86 is subject to Serine amide.

It belongs to the glucagon family. Expressed by the venom gland.

It is found in the secreted. In terms of biological role, venom protein that mimics the incretin hormone glucagon-like peptide 1 (GLP-1). It stimulates insulin synthesis and secretion, protects against beta-cell apoptosis in response to different insults, and promotes beta-cell proliferation It also promotes satiety, reduces food intake, reduces fat deposition, reduces body weight and inhibits gastric emptying. Interacts with GLP-1 receptor (GLP1R). Induces hypotension that is mediated by relaxation of cardiac smooth muscle. This is Exendin-4 from Heloderma suspectum cinctum (Banded Gila monster).